Here is a 342-residue protein sequence, read N- to C-terminus: Isopentenyl-diphosphate delta-isomerase (342 aa).

A substrate-binding site is contributed by 12-13 (RK). FMN-binding positions include 71-73 (AMT), Ser101, and Asn129. 101 to 103 (SQR) is a substrate binding site. A substrate-binding site is contributed by Gln163. Glu164 is a binding site for Mg(2+). Residues Lys195, Thr225, 272–274 (GIR), and 293–294 (AR) contribute to the FMN site.

It belongs to the IPP isomerase type 2 family. As to quaternary structure, homooctamer. Dimer of tetramers. The cofactor is FMN. NADPH is required as a cofactor. Mg(2+) serves as cofactor.

Its subcellular location is the cytoplasm. It catalyses the reaction isopentenyl diphosphate = dimethylallyl diphosphate. In terms of biological role, involved in the biosynthesis of isoprenoids. Catalyzes the 1,3-allylic rearrangement of the homoallylic substrate isopentenyl (IPP) to its allylic isomer, dimethylallyl diphosphate (DMAPP). This chain is Isopentenyl-diphosphate delta-isomerase, found in Mycolicibacterium vanbaalenii (strain DSM 7251 / JCM 13017 / BCRC 16820 / KCTC 9966 / NRRL B-24157 / PYR-1) (Mycobacterium vanbaalenii).